Here is a 925-residue protein sequence, read N- to C-terminus: Neuronal PAS domain-containing protein 3 (925 aa).

The bHLH domain occupies 58–111 (LRKEKSRDAARSRRGKENFEFYELAKLLPLPAAITSQLDKASIIRLTISYLKMR). The DNA-binding stretch occupies residues 60–71 (KEKSRDAARSRR). 2 disordered regions span residues 119 to 138 (PPWN…KGAQ) and 219 to 257 (LPPG…SPSL). Residues 152–222 (EAHLGSHILQ…EQLGMKLPPG (71 aa)) form the PAS 1 domain. Residues 234-256 (AASSASSSSQSETPEPVETTSPS) show a composition bias toward low complexity. Residues 324–394 (PPPTINEVRI…HSHLDLLNKG (71 aa)) enclose the PAS 2 domain. One can recognise a PAC domain in the interval 398 to 441 (TKYYRWMQKNGGYIWIQSSATIAINAKNANEKNIIWVNYLLSNP). Disordered stretches follow at residues 457-555 (PEKA…FGAL), 576-645 (PCES…SSPH), and 664-774 (NESS…GASN). 2 stretches are compositionally biased toward basic and acidic residues: residues 484–493 (ENSKSDEKGN) and 529–549 (DSRD…KAAE). Positions 601 to 622 (KHQKRKRRRKRQKGGSASRRRL) are enriched in basic residues. Residues 680–690 (NESPYSMTKPP) are compositionally biased toward polar residues. Gly residues-rich tracts occupy residues 700 to 710 (GQGGSIGGGGA) and 760 to 771 (GGGAGSGGGGPG).

Efficient DNA binding requires dimerization with another bHLH protein. Interacts with ARNT; forms a heterodimer that binds core DNA sequence 5'-[AG]CGTG-3' within the hypoxia response element (HRE) of target gene promoters. As to expression, detected exclusively in adult brain in inhibitory interneurons.

Its subcellular location is the nucleus. In terms of biological role, may play a broad role in neurogenesis. May control regulatory pathways relevant to schizophrenia and to psychotic illness. In Mus musculus (Mouse), this protein is Neuronal PAS domain-containing protein 3 (Npas3).